We begin with the raw amino-acid sequence, 212 residues long: WAP four-disulfide core domain protein 1 (212 aa).

A signal peptide spans 1–26 (MGSCDRKALWALSFLLLLLGSSSVQG). The interval 43 to 62 (EEVAATGSRQPHADRCPPPP) is disordered. The region spanning 51–100 (RQPHADRCPPPPRTLPPGACQATRCQSDSECPRHRRCCYNGCAYACLEAV) is the WAP domain. 4 disulfides stabilise this stretch: cysteine 58–cysteine 88, cysteine 70–cysteine 92, cysteine 75–cysteine 87, and cysteine 81–cysteine 96. A disordered region spans residues 191–212 (EYPEGDSKYVAEPGKGQQRHFP).

Vascular smooth muscle and prostate. Periacinar ring.

Its subcellular location is the secreted. Functionally, has growth inhibitory activity. In Rattus norvegicus (Rat), this protein is WAP four-disulfide core domain protein 1 (Wfdc1).